Consider the following 412-residue polypeptide: GATOR complex protein NPRL2 (412 aa).

The protein belongs to the NPR2 family. Component of the GATOR complex consisting of mio, Nup44A/Seh1, Im11, Nplr3, Nplr2, Wdr24, Wdr59 and Sec13. Within the GATOR complex, probable component of the GATOR1 subcomplex which is likely composed of Iml1, Nplr2 and Nplr3. Interacts with Nprl3.

Its subcellular location is the cytoplasm. It is found in the lysosome. Functionally, an essential component of the GATOR subcomplex GATOR1 which functions as an inhibitor of the amino acid-sensing branch of the TORC1 signaling pathway. The two GATOR subcomplexes, GATOR1 and GATOR2, regulate the TORC1 pathway in order to mediate metabolic homeostasis, female gametogenesis and the response to amino acid limitation and complete starvation. The function of GATOR1 in negatively regulating the TORC1 pathway is essential for maintaining baseline levels of TORC1 activity under nutrient rich conditions, and for promoting survival during amino acid or complete starvation by inhibiting TORC1-dependent cell growth and promoting catabolic metabolism and autophagy. In addition, this inhibition of TORC1 is necessary to maintain female fertility under normal conditions and during periods of nutrient stress. GATOR1 and GATOR2 act at different stages of oogenesis to regulate TORC1 in order to control meiotic entry and promote oocyte growth and development. After exactly four mitotic cyst divisions, the GATOR1 complex members (Iml1, Nprl2 and Nprl3) down-regulate TORC1 to slow cellular metabolism and promote the mitotic/meiotic transition. At later stages of oogenesis, the mio and Nup44A components of the GATOR2 complex inhibit GATOR1 and thus activate TORC1 to promote meiotic progression, and drive oocyte growth and development. In Drosophila melanogaster (Fruit fly), this protein is GATOR complex protein NPRL2.